A 206-amino-acid polypeptide reads, in one-letter code: Tumor protein D54 (206 aa).

The residue at position 1 (methionine 1) is an N-acetylmethionine. Over residues 1–14 the composition is skewed to polar residues; it reads MDSAGQDINLNSPN. The interval 1–24 is disordered; the sequence is MDSAGQDINLNSPNKGLLSDSMTD. 4 positions are modified to phosphoserine: serine 3, serine 12, serine 19, and serine 21. Residues 38-82 adopt a coiled-coil conformation; that stretch reads VEGLTEAEEEELRAELTKVEEEIVTLRQVLAAKERHCGELKRRLG. Phosphoserine occurs at positions 96, 149, and 161. Threonine 163 carries the post-translational modification Phosphothreonine. A Phosphoserine modification is found at serine 166. The residue at position 173 (threonine 173) is a Phosphothreonine. Residues 175–185 are compositionally biased toward basic and acidic residues; that stretch reads KSKVVGDRENG. The disordered stretch occupies residues 175-206; it reads KSKVVGDRENGSDSLPSSAGSGDKPLSDPAPF. A phosphoserine mark is found at serine 192 and serine 195.

This sequence belongs to the TPD52 family. Forms a homodimer or heterodimer with other members of the family. Interacts with MAL2.

The chain is Tumor protein D54 (TPD52L2) from Pongo abelii (Sumatran orangutan).